Here is a 267-residue protein sequence, read N- to C-terminus: Tryptophan synthase alpha chain (267 aa).

Active-site proton acceptor residues include E49 and D60.

It belongs to the TrpA family. Tetramer of two alpha and two beta chains.

The catalysed reaction is (1S,2R)-1-C-(indol-3-yl)glycerol 3-phosphate + L-serine = D-glyceraldehyde 3-phosphate + L-tryptophan + H2O. Its pathway is amino-acid biosynthesis; L-tryptophan biosynthesis; L-tryptophan from chorismate: step 5/5. Its function is as follows. The alpha subunit is responsible for the aldol cleavage of indoleglycerol phosphate to indole and glyceraldehyde 3-phosphate. This chain is Tryptophan synthase alpha chain, found in Geobacter sp. (strain M21).